The chain runs to 227 residues: Uracil-DNA glycosylase (227 aa).

The Proton acceptor role is filled by Asp64.

This sequence belongs to the uracil-DNA glycosylase (UDG) superfamily. UNG family.

It localises to the cytoplasm. The enzyme catalyses Hydrolyzes single-stranded DNA or mismatched double-stranded DNA and polynucleotides, releasing free uracil.. Its function is as follows. Excises uracil residues from the DNA which can arise as a result of misincorporation of dUMP residues by DNA polymerase or due to deamination of cytosine. The protein is Uracil-DNA glycosylase of Sodalis glossinidius (strain morsitans).